Here is a 393-residue protein sequence, read N- to C-terminus: S-adenosylmethionine synthase 1 (393 aa).

E9 lines the Mg(2+) pocket. ATP is bound at residue H15. E43 contacts K(+). Positions 56 and 99 each coordinate L-methionine. Residues 167 to 169 (DGK), 235 to 238 (SGRF), D246, 252 to 253 (RK), A269, K273, and K277 contribute to the ATP site. Residue D246 coordinates L-methionine. K277 contributes to the L-methionine binding site.

Belongs to the AdoMet synthase family. Homotetramer. Mn(2+) serves as cofactor. It depends on Mg(2+) as a cofactor. The cofactor is Co(2+). Requires K(+) as cofactor.

The protein resides in the cytoplasm. It carries out the reaction L-methionine + ATP + H2O = S-adenosyl-L-methionine + phosphate + diphosphate. It functions in the pathway amino-acid biosynthesis; S-adenosyl-L-methionine biosynthesis; S-adenosyl-L-methionine from L-methionine: step 1/1. Catalyzes the formation of S-adenosylmethionine from methionine and ATP. The reaction comprises two steps that are both catalyzed by the same enzyme: formation of S-adenosylmethionine (AdoMet) and triphosphate, and subsequent hydrolysis of the triphosphate. This chain is S-adenosylmethionine synthase 1 (SAMS1), found in Brassica juncea (Indian mustard).